We begin with the raw amino-acid sequence, 194 residues long: MKIKKADFVKSAVYEKDYPEQLDKMEFAFVGRSNVGKSSLINSLTSRLKLARTSKTPGRTQLINYFLINDEFYIVDLPGYGFAKVPKEMKKQWGQTMERYIASKRKKLVFVLLDIRRVPSDEDIEMLEWLEYNEMDYKIIFTKIDKLSNNERAKQLKAIKTRLVFDNEDVFFHSSLTNKGRDEILNFMEEKLNN.

Positions 23-194 constitute an EngB-type G domain; that stretch reads DKMEFAFVGR…LNFMEEKLNN (172 aa). GTP-binding positions include 31–38, 58–62, 76–79, 142–145, and 173–175; these read GRSNVGKS, GRTQL, DLPG, TKID, and HSS. Serine 38 and threonine 60 together coordinate Mg(2+).

This sequence belongs to the TRAFAC class TrmE-Era-EngA-EngB-Septin-like GTPase superfamily. EngB GTPase family. Requires Mg(2+) as cofactor.

Its function is as follows. Necessary for normal cell division and for the maintenance of normal septation. This Fusobacterium nucleatum subsp. nucleatum (strain ATCC 25586 / DSM 15643 / BCRC 10681 / CIP 101130 / JCM 8532 / KCTC 2640 / LMG 13131 / VPI 4355) protein is Probable GTP-binding protein EngB.